The primary structure comprises 142 residues: Large ribosomal subunit protein uL13 (142 aa).

The protein belongs to the universal ribosomal protein uL13 family. As to quaternary structure, part of the 50S ribosomal subunit.

In terms of biological role, this protein is one of the early assembly proteins of the 50S ribosomal subunit, although it is not seen to bind rRNA by itself. It is important during the early stages of 50S assembly. The protein is Large ribosomal subunit protein uL13 of Vesicomyosocius okutanii subsp. Calyptogena okutanii (strain HA).